Reading from the N-terminus, the 921-residue chain is MASKGTEGGHGGVERKEQQQQRGYQLPRDSRGSLEVFNPSSASSFRTAAAAPKSASPFLAIPDREEDNVVAQQRAAEWGLVLQTDHHTGLPQGVSARPSSGSARTSSEDNPQQQQSAAAIPRVSEELRAALSAFQQTFVVSDATHPNHPIMYASAGFFNMTGYTSKEVVGRNCRFLQGSGTDPHEIDKIRQSLANGSNYCGRILNYKKDGTPFWNLLTIAPIKDEDGRLLKFIGMQVEVSKYTEGKKDTVVRPNGLSESLIKYDARQKDHARSSVSELLLALKNPRSLSESSNNTLKRKSQESLSMSMTEVPSKRSSESGSRRNSRSGTRSSLQKINEVPDQGNRTRKSGLRAFMGFLGMGHGSVEKNMLKPRDEDPLIDSDDERPESFEDEFRRKEMRRGIDLATTLERIEKNFVITDPRLPDNPIIFASDSFLQLTEYNREEILGRNCRFLQGPETDRATVRKIRDAIDNQAEVTVQLINYTKSGKKFWNLFHLQPMRDQKGDVQYFIGVQLDGTEHVQDDAAKEGVVLVKKTADNIDEAAKELPDANLRPEDLWANHSKVVLPNPHMKDTASWRAIQKVLESGESIGLKHFRPVKPLGSGDTGSVHLVELLNTGEYFAMKAMDKSIMLNRNKVHRATAERQILDLLDHPFLPTLYASFQTKTHICLITDYCPGGELFVLLDNQPLKVLHEDAVRFYAAEVVVALEYLHCQGIIYRDLKPENILLHRDGHISLTDFDLSCLTSCRPQVFLPEDADEKKGRKNGSYPIFFAEPMRASNSFVGTEEYIAPEIITGAGHTSAVDWWALGILLYEMLYGYTPFRGKTRQRTFANILHKDIRFPASISVSLAARQLMYRLLHRDPANRLGSYEGANEIKGHPFFRGINWPLIRATAPPKLEIPLFSKDDMEKKGLVTNNRTDMF.

Over residues 1–11 (MASKGTEGGHG) the composition is skewed to gly residues. 2 disordered regions span residues 1–59 (MASK…SPFL) and 88–118 (TGLP…QSAA). Residues 40–51 (SSASSFRTAAAA) show a composition bias toward low complexity. The span at 97 to 117 (RPSSGSARTSSEDNPQQQQSA) shows a compositional bias: polar residues. The 75-residue stretch at 123 to 197 (VSEELRAALS…KIRQSLANGS (75 aa)) folds into the PAS 1 domain. FMN-binding positions include 172–177 (NCRFLQ), Arg-190, Asn-205, Asn-215, and Gln-236. The residue at position 173 (Cys-173) is an S-4a-FMN cysteine. In terms of domain architecture, PAC 1 spans 197 to 251 (SNYCGRILNYKKDGTPFWNLLTIAPIKDEDGRLLKFIGMQVEVSKYTEGKKDTVV). A compositionally biased stretch (polar residues) spans 286–295 (RSLSESSNNT). Disordered stretches follow at residues 286 to 347 (RSLS…NRTR) and 364 to 390 (SVEK…ESFE). Composition is skewed to basic and acidic residues over residues 312 to 321 (PSKRSSESGS) and 364 to 376 (SVEK…RDED). One can recognise a PAS 2 domain in the interval 400-473 (RGIDLATTLE…RKIRDAIDNQ (74 aa)). FMN is bound by residues 449-454 (NCRFLQ), Arg-467, Asn-482, Asn-492, and Gln-513. Residue Cys-450 is modified to S-4a-FMN cysteine. Positions 474 to 528 (AEVTVQLINYTKSGKKFWNLFHLQPMRDQKGDVQYFIGVQLDGTEHVQDDAAKEG) constitute a PAC 2 domain. One can recognise a Protein kinase domain in the interval 594–881 (FRPVKPLGSG…ANEIKGHPFF (288 aa)). ATP-binding positions include 600–608 (LGSGDTGSV) and Lys-623. The active-site Proton acceptor is the Asp-719.

The protein belongs to the protein kinase superfamily. Ser/Thr protein kinase family. In terms of assembly, homodimer. The cofactor is FMN. In terms of processing, autophosphorylated in response to blue light irradiation. Post-translationally, 2 molecules of FMN bind covalently to cysteines after exposure to blue light and are reversed in the dark. Highly expressed in coleoptiles of dark-grown seedlings.

The enzyme catalyses L-seryl-[protein] + ATP = O-phospho-L-seryl-[protein] + ADP + H(+). The catalysed reaction is L-threonyl-[protein] + ATP = O-phospho-L-threonyl-[protein] + ADP + H(+). Its function is as follows. Protein kinase that acts as a blue light photoreceptor in a signal-transduction pathway for phototropic responses. Regulates a wide range of physiological activities in plants that maximize the efficiency of photosynthesis, such as chloroplast relocations, stomata opening, and leaf expansion. The sequence is that of Phototropin-1A (PHOT1A) from Oryza sativa subsp. japonica (Rice).